A 105-amino-acid polypeptide reads, in one-letter code: ATP synthase subunit c (105 aa).

Transmembrane regions (helical) follow at residues 3-23, 32-52, and 78-98; these read FLSLFFLALAGVAFAHDGGMG, SILGAMIGLGIAAFGGAIGMG, and VAMAMIEAQVIYTLVFAIIAI.

It belongs to the ATPase C chain family. In terms of assembly, F-type ATPases have 2 components, F(1) - the catalytic core - and F(0) - the membrane proton channel. F(1) has five subunits: alpha(3), beta(3), gamma(1), delta(1), epsilon(1). F(0) has three main subunits: a(1), b(2) and c(10-14). The alpha and beta chains form an alternating ring which encloses part of the gamma chain. F(1) is attached to F(0) by a central stalk formed by the gamma and epsilon chains, while a peripheral stalk is formed by the delta and b chains.

It localises to the cell inner membrane. Its function is as follows. F(1)F(0) ATP synthase produces ATP from ADP in the presence of a proton or sodium gradient. F-type ATPases consist of two structural domains, F(1) containing the extramembraneous catalytic core and F(0) containing the membrane proton channel, linked together by a central stalk and a peripheral stalk. During catalysis, ATP synthesis in the catalytic domain of F(1) is coupled via a rotary mechanism of the central stalk subunits to proton translocation. In terms of biological role, key component of the F(0) channel; it plays a direct role in translocation across the membrane. A homomeric c-ring of between 10-14 subunits forms the central stalk rotor element with the F(1) delta and epsilon subunits. The chain is ATP synthase subunit c from Helicobacter pylori (strain Shi470).